The chain runs to 185 residues: NADH-dependent FMN reductase AsuE2 (185 aa).

Over residues 1–13 (MSTHTARRAGATA) the composition is skewed to low complexity. The disordered stretch occupies residues 1 to 24 (MSTHTARRAGATAGHDRDRGTEPG). Basic and acidic residues predominate over residues 14–24 (GHDRDRGTEPG).

This sequence belongs to the non-flavoprotein flavin reductase family. As to quaternary structure, does not interact with AsuE1, suggesting a possible transient interaction between the two enzymes instead of formation of a stable complex.

It catalyses the reaction FMNH2 + NAD(+) = FMN + NADH + 2 H(+). The protein operates within antibiotic biosynthesis. In terms of biological role, involved in the biosynthesis of the antibiotic asukamycin. When flavin concentration is low, AsuE2 assists the protoasukamycin 4-monooxygenase AsuE1 by providing a reduced form of flavin, enhancing AsuE1 activity. The sequence is that of NADH-dependent FMN reductase AsuE2 from Streptomyces nodosus subsp. asukaensis.